We begin with the raw amino-acid sequence, 453 residues long: Ribulose bisphosphate carboxylase large chain (453 aa).

The propeptide occupies 1–2 (MS). Pro-3 is modified (N-acetylproline). Lys-14 carries the N6,N6,N6-trimethyllysine modification. 2 residues coordinate substrate: Asn-123 and Thr-173. Lys-175 functions as the Proton acceptor in the catalytic mechanism. Position 177 (Lys-177) interacts with substrate. Lys-201, Asp-203, and Glu-204 together coordinate Mg(2+). At Lys-201 the chain carries N6-carboxylysine. Residue His-294 is the Proton acceptor of the active site. Substrate-binding residues include Arg-295, His-327, and Ser-379.

It belongs to the RuBisCO large chain family. Type I subfamily. In terms of assembly, heterohexadecamer of 8 large chains and 8 small chains; disulfide-linked. The disulfide link is formed within the large subunit homodimers. Mg(2+) is required as a cofactor. The disulfide bond which can form in the large chain dimeric partners within the hexadecamer appears to be associated with oxidative stress and protein turnover.

It localises to the plastid. Its subcellular location is the chloroplast. The catalysed reaction is 2 (2R)-3-phosphoglycerate + 2 H(+) = D-ribulose 1,5-bisphosphate + CO2 + H2O. The enzyme catalyses D-ribulose 1,5-bisphosphate + O2 = 2-phosphoglycolate + (2R)-3-phosphoglycerate + 2 H(+). In terms of biological role, ruBisCO catalyzes two reactions: the carboxylation of D-ribulose 1,5-bisphosphate, the primary event in carbon dioxide fixation, as well as the oxidative fragmentation of the pentose substrate in the photorespiration process. Both reactions occur simultaneously and in competition at the same active site. The chain is Ribulose bisphosphate carboxylase large chain from Galium corsicum.